Consider the following 339-residue polypeptide: MAGRVKIKQKELIDSTVKNKNVMNLFHEIIGSKGNINFSVVWPKFKKIKQSVYDYISTLSVLEKASVMQNFEDDKKLLELFVQKLWAAYEGYFKYPEIEKYEVEGQVNFNLVPQYVLEKFSQLYRIRINSELVTLILNSCAFMSKYNDYILKKDPYILTITPGLCFSPIPNFEDLNFKHLYNSDKNSQHDKDFIMFILYKLYTAALGVYNAISIPDIDVEDLENIILSSVSQIKKQIPRCKDAFNKIESSVHLLRKNFNTYYSDYVGSGYNPTIIMEQYIKDISQDSKNISPRISYQFRTIIKYYRDMIATKHQTMDPQVLNLVKHVEKKLDMLDREKN.

This sequence belongs to the asfivirus H339R family. Interacts with host NACA (alpha chain of nascent polypeptide-associated complex).

The protein localises to the host cytoplasm. It localises to the host nucleus. The protein is Protein H339R of African swine fever virus (isolate Tick/South Africa/Pretoriuskop Pr4/1996) (ASFV).